The following is a 179-amino-acid chain: Bifunctional protein PyrR (179 aa).

The PRPP-binding signature appears at 100 to 112 (VILIDDVLFTGRT).

The protein belongs to the purine/pyrimidine phosphoribosyltransferase family. PyrR subfamily.

It carries out the reaction UMP + diphosphate = 5-phospho-alpha-D-ribose 1-diphosphate + uracil. Functionally, regulates the transcription of the pyrimidine nucleotide (pyr) operon in response to exogenous pyrimidines. Its function is as follows. Also displays a weak uracil phosphoribosyltransferase activity which is not physiologically significant. This Mannheimia succiniciproducens (strain KCTC 0769BP / MBEL55E) protein is Bifunctional protein PyrR.